A 481-amino-acid polypeptide reads, in one-letter code: Ammonium transporter 2 member 3 (481 aa).

The Extracellular portion of the chain corresponds to 1-36 (MNFNSSKYISHLPESLLPNDASPEWNNKADNAWQLT). An N-linked (GlcNAc...) asparagine glycan is attached at asparagine 4. Residues 37 to 57 (AATLVGLQTVPGLVILYGSMV) traverse the membrane as a helical segment. The Cytoplasmic portion of the chain corresponds to 58–62 (KKKWA). The helical transmembrane segment at 63–83 (VNSAFMALYAFAAVLVCWVLW) threads the bilayer. Over 84-123 (AHHMAFGTKLLPFVGKPNFALSQKFLLSKASTNYYLPMAD) the chain is Extracellular. Residues 124 to 144 (FVFYQFAFAAITLVLLGGSLL) form a helical membrane-spanning segment. The Cytoplasmic portion of the chain corresponds to 145–151 (GRMNFYA). The chain crosses the membrane as a helical span at residues 152 to 172 (WMLFVPLWLTLSYTVGAFTIW). Topologically, residues 173–184 (GNGFLEGKIIDY) are extracellular. A helical transmembrane segment spans residues 185-205 (AGGFVIHLSSGVAGFTAAYWV). Residues 206–220 (GPRTSNDRQNFPPNN) are Cytoplasmic-facing. Residues 221-241 (IIHMLGGAGFLWMGWTGFNGG) form a helical membrane-spanning segment. The Extracellular portion of the chain corresponds to 242-248 (APFQVGE). The helical transmembrane segment at 249–269 (ITSLAIFNTHLCTATSILVWI) threads the bilayer. Topologically, residues 270-281 (SLDMAVYKKGSL) are cytoplasmic. Residues 282–302 (IGSVQGMMTGLVCITPGAGLV) form a helical membrane-spanning segment. Residues 303 to 304 (DP) lie on the Extracellular side of the membrane. The helical transmembrane segment at 305–325 (WAAILMGALSGSIPWYTMMVL) threads the bilayer. Topologically, residues 326-338 (HKKSPFFQSVDDT) are cytoplasmic. The helical transmembrane segment at 339 to 359 (LGVFHTHAVAGILGGILSGVF) threads the bilayer. Topologically, residues 360–363 (AKPK) are extracellular. The helical transmembrane segment at 364-381 (LLRILYGPYGSGLLYSYF) threads the bilayer. The Cytoplasmic segment spans residues 382 to 395 (DDNIGQGIKQMWYQ). The chain crosses the membrane as a helical span at residues 396 to 416 (LLGAVFITIWNVVITSLICIL). The Extracellular segment spans residues 417–481 (LNRFVNLRMQ…HSFPINKIDE (65 aa)).

This sequence belongs to the ammonia transporter channel (TC 1.A.11.2) family. Mostly expressed in mycorrhizal roots. Also observed in the cortex and endodermis of non-mycorrhizal roots.

The protein resides in the cell membrane. In terms of biological role, involved in ammonium transport. Required for arbuscular mycorrhizal (AM) symbiosis with AM fungi (e.g. Glomus versiforme and G.intraradices) in low nitrogen conditions. In Medicago truncatula (Barrel medic), this protein is Ammonium transporter 2 member 3.